Reading from the N-terminus, the 296-residue chain is Dof zinc finger protein DOF3.7 (296 aa).

The disordered stretch occupies residues 41–69 (NTRPNATASNGGSGGNTNNTATMETRKAR). Positions 45–62 (NATASNGGSGGNTNNTAT) are enriched in low complexity. The segment at 74 to 128 (VNCPRCNSTNTKFCYYNNYSLTQPRYFCKGCRRYWTEGGSLRNVPVGGSSRKNKR) adopts a Dof-type zinc-finger fold. Residues Cys76, Cys79, Cys101, and Cys104 each coordinate Zn(2+). The tract at residues 115 to 146 (RNVPVGGSSRKNKRSSTPLASPSNPKLPDLNP) is disordered. Positions 129-138 (SSTPLASPSN) are enriched in polar residues.

Expressed in the phloem of the mother plant, including in roots, stem, leaves and flowers, but not present in the seed and embryo. In maturing siliques, found all through the funiculus connecting the placenta to the ovule, but not in the ovule.

It is found in the nucleus. Its function is as follows. Transcription factor specifically involved in the maternal control of seed germination. Regulates transcription by binding to a 5'-AA[AG]G-3' consensus core sequence. May ensure the inactivity of a component that would be activated to trigger germination as a consequence of red light perception. The chain is Dof zinc finger protein DOF3.7 (DOF3.7) from Arabidopsis thaliana (Mouse-ear cress).